The following is a 306-amino-acid chain: Bifunctional protein FolD 1 (306 aa).

NADP(+)-binding positions include 170–172 (GRG), T199, and V240. Residues 285 to 306 (ARRTRSSRTPVRLPDSGAPAGR) are disordered.

The protein belongs to the tetrahydrofolate dehydrogenase/cyclohydrolase family. Homodimer.

The enzyme catalyses (6R)-5,10-methylene-5,6,7,8-tetrahydrofolate + NADP(+) = (6R)-5,10-methenyltetrahydrofolate + NADPH. The catalysed reaction is (6R)-5,10-methenyltetrahydrofolate + H2O = (6R)-10-formyltetrahydrofolate + H(+). It participates in one-carbon metabolism; tetrahydrofolate interconversion. Functionally, catalyzes the oxidation of 5,10-methylenetetrahydrofolate to 5,10-methenyltetrahydrofolate and then the hydrolysis of 5,10-methenyltetrahydrofolate to 10-formyltetrahydrofolate. The chain is Bifunctional protein FolD 1 from Salinispora tropica (strain ATCC BAA-916 / DSM 44818 / JCM 13857 / NBRC 105044 / CNB-440).